The chain runs to 209 residues: uncharacterized protein (209 aa).

Positions 1–19 (MGYFPYLAVFVCLLASGDA) are cleaved as a signal peptide. Asn-41 and Asn-109 each carry an N-linked (GlcNAc...) asparagine glycan.

Component of the acid-soluble organic matrix of prismatic shell layers (at protein level).

Its subcellular location is the secreted. This is an uncharacterized protein from Haliotis asinina (Donkey's ear abalone).